Reading from the N-terminus, the 346-residue chain is Uroporphyrinogen decarboxylase (346 aa).

Residues 23 to 27 (RQAGR), Asp73, Tyr151, Ser206, and His321 contribute to the substrate site.

This sequence belongs to the uroporphyrinogen decarboxylase family. As to quaternary structure, homodimer.

The protein resides in the cytoplasm. It carries out the reaction uroporphyrinogen III + 4 H(+) = coproporphyrinogen III + 4 CO2. The protein operates within porphyrin-containing compound metabolism; protoporphyrin-IX biosynthesis; coproporphyrinogen-III from 5-aminolevulinate: step 4/4. Its function is as follows. Catalyzes the decarboxylation of four acetate groups of uroporphyrinogen-III to yield coproporphyrinogen-III. The chain is Uroporphyrinogen decarboxylase from Aliarcobacter butzleri (strain RM4018) (Arcobacter butzleri).